The chain runs to 527 residues: Transcription factor bHLH157 (527 aa).

Disordered regions lie at residues Ser-295–Gln-318 and Ser-335–Gln-368. The span at Thr-307–Gln-318 shows a compositional bias: polar residues. The Nuclear localization signal signature appears at Trp-341–Gly-348. Positions Lys-343 to Gln-368 are enriched in basic and acidic residues. The region spanning Ala-354–Met-403 is the bHLH domain.

The protein belongs to the bHLH protein family. LHW subfamily. In terms of assembly, homodimer.

Its subcellular location is the nucleus. Functionally, transcription factor that may regulate root development. This Arabidopsis thaliana (Mouse-ear cress) protein is Transcription factor bHLH157 (BHLH157).